Consider the following 467-residue polypeptide: 3-isopropylmalate dehydratase large subunit (467 aa).

[4Fe-4S] cluster-binding residues include C347, C407, and C410.

The protein belongs to the aconitase/IPM isomerase family. LeuC type 1 subfamily. As to quaternary structure, heterodimer of LeuC and LeuD. [4Fe-4S] cluster serves as cofactor.

It catalyses the reaction (2R,3S)-3-isopropylmalate = (2S)-2-isopropylmalate. It participates in amino-acid biosynthesis; L-leucine biosynthesis; L-leucine from 3-methyl-2-oxobutanoate: step 2/4. Catalyzes the isomerization between 2-isopropylmalate and 3-isopropylmalate, via the formation of 2-isopropylmaleate. This Prochlorococcus marinus (strain MIT 9301) protein is 3-isopropylmalate dehydratase large subunit.